A 109-amino-acid polypeptide reads, in one-letter code: Parvalbumin beta 2 (109 aa).

N-acetylalanine is present on A2. EF-hand domains follow at residues 39–74 (KSPADIKKVFEIIDQDKSDFVEEDELKLFLQNFSAG) and 78–109 (LSDAETKVFLKAGDSDGDGKIGVDEFGAMIKA). D52, D54, S56, F58, E60, E63, D91, D93, D95, K97, and E102 together coordinate Ca(2+).

It belongs to the parvalbumin family. In terms of assembly, monomer.

In muscle, parvalbumin is thought to be involved in relaxation after contraction. It binds two calcium ions. In Gadus morhua (Atlantic cod), this protein is Parvalbumin beta 2.